Reading from the N-terminus, the 87-residue chain is uncharacterized protein (87 aa).

Positions 1-25 (MKIRKILLSSALSFGMLISAVPALA) are cleaved as a signal peptide.

This is an uncharacterized protein from Bacillus subtilis (strain 168).